A 209-amino-acid polypeptide reads, in one-letter code: 8-oxoguanine DNA glycosylase/AP lyase (209 aa).

Residues Lys-132 and Asp-150 contribute to the active site.

It belongs to the type-2 OGG1 family.

It catalyses the reaction 2'-deoxyribonucleotide-(2'-deoxyribose 5'-phosphate)-2'-deoxyribonucleotide-DNA = a 3'-end 2'-deoxyribonucleotide-(2,3-dehydro-2,3-deoxyribose 5'-phosphate)-DNA + a 5'-end 5'-phospho-2'-deoxyribonucleoside-DNA + H(+). In terms of biological role, catalyzes the excision of an oxidatively damaged form of guanine (7,8-dihydro-8-oxoguanine = 8-oxoG) from DNA. Also cleaves the DNA backbone at apurinic/apyrimidinic sites (AP sites). This is 8-oxoguanine DNA glycosylase/AP lyase from Picrophilus torridus (strain ATCC 700027 / DSM 9790 / JCM 10055 / NBRC 100828 / KAW 2/3).